Reading from the N-terminus, the 284-residue chain is Malonyl-[acyl-carrier protein] O-methyltransferase (284 aa).

It belongs to the methyltransferase superfamily.

It carries out the reaction malonyl-[ACP] + S-adenosyl-L-methionine = malonyl-[ACP] methyl ester + S-adenosyl-L-homocysteine. It functions in the pathway cofactor biosynthesis; biotin biosynthesis. Converts the free carboxyl group of a malonyl-thioester to its methyl ester by transfer of a methyl group from S-adenosyl-L-methionine (SAM). It allows to synthesize pimeloyl-ACP via the fatty acid synthetic pathway. The chain is Malonyl-[acyl-carrier protein] O-methyltransferase from Legionella pneumophila subsp. pneumophila (strain Philadelphia 1 / ATCC 33152 / DSM 7513).